The sequence spans 448 residues: MKHRYLPATEKDKQEMLATIGVSSIDDLFADIPENVKYKKEHQIKKAKSETELTRELTKLASKNRDTVQYASFLGAGVYDHYQPVIVDHVISRSEFYTAYTPYQPEISQGELQAIFEFQTMICELTGMDIANSSMYDGGTALAEAAMLASGHTKKKKIVVSKTVHPESREVLKTYAKGQYIDVVEVPAADGVTDLDALRQTVCENTAAVIVQYPNFFGRIEPLKDIEPIAHQGKSMFIVSANPLALGLLTPPGKFQSDIVVGDAQPFGIPSAYGGPHCGFFAVTKKLMRKVPGRLVGQTEDENGKRGFVLTLQAREQHIRRDKATSNICSNQALNALAASVAMTALGKNGVKDIARQNLLKANYAKQEAKKAGLTVMFDGPMFNEFVIKLDEPVRAVNKRLLAKGMIGGYDLGLTYPELDCHMLIAVTELRTKEEIDALIQELGDRHE.

It belongs to the GcvP family. N-terminal subunit subfamily. In terms of assembly, the glycine cleavage system is composed of four proteins: P, T, L and H. In this organism, the P 'protein' is a heterodimer of two subunits.

It carries out the reaction N(6)-[(R)-lipoyl]-L-lysyl-[glycine-cleavage complex H protein] + glycine + H(+) = N(6)-[(R)-S(8)-aminomethyldihydrolipoyl]-L-lysyl-[glycine-cleavage complex H protein] + CO2. Its function is as follows. The glycine cleavage system catalyzes the degradation of glycine. The P protein binds the alpha-amino group of glycine through its pyridoxal phosphate cofactor; CO(2) is released and the remaining methylamine moiety is then transferred to the lipoamide cofactor of the H protein. In Bacillus subtilis (strain 168), this protein is Probable glycine dehydrogenase (decarboxylating) subunit 1 (gcvPA).